Here is a 566-residue protein sequence, read N- to C-terminus: Proline--tRNA ligase 1 (566 aa).

It belongs to the class-II aminoacyl-tRNA synthetase family. ProS type 1 subfamily. In terms of assembly, homodimer.

It is found in the cytoplasm. It carries out the reaction tRNA(Pro) + L-proline + ATP = L-prolyl-tRNA(Pro) + AMP + diphosphate. Functionally, catalyzes the attachment of proline to tRNA(Pro) in a two-step reaction: proline is first activated by ATP to form Pro-AMP and then transferred to the acceptor end of tRNA(Pro). As ProRS can inadvertently accommodate and process non-cognate amino acids such as alanine and cysteine, to avoid such errors it has two additional distinct editing activities against alanine. One activity is designated as 'pretransfer' editing and involves the tRNA(Pro)-independent hydrolysis of activated Ala-AMP. The other activity is designated 'posttransfer' editing and involves deacylation of mischarged Ala-tRNA(Pro). The misacylated Cys-tRNA(Pro) is not edited by ProRS. This is Proline--tRNA ligase 1 from Bacillus cereus (strain ZK / E33L).